We begin with the raw amino-acid sequence, 149 residues long: Transcriptional regulator MraZ (149 aa).

2 consecutive SpoVT-AbrB domains span residues 6 to 52 and 81 to 124; these read RSHR…PYPD and AEEM…DQSK.

It belongs to the MraZ family. As to quaternary structure, forms oligomers.

It localises to the cytoplasm. It is found in the nucleoid. The chain is Transcriptional regulator MraZ from Nitratidesulfovibrio vulgaris (strain ATCC 29579 / DSM 644 / CCUG 34227 / NCIMB 8303 / VKM B-1760 / Hildenborough) (Desulfovibrio vulgaris).